The sequence spans 234 residues: GTP cyclohydrolase 1 type 2 homolog (234 aa).

A divalent metal cation contacts are provided by His61, His62, Asp80, His195, and Glu199.

Belongs to the GTP cyclohydrolase I type 2/NIF3 family. As to quaternary structure, homohexamer.

The sequence is that of GTP cyclohydrolase 1 type 2 homolog from Methanothermobacter thermautotrophicus (strain ATCC 29096 / DSM 1053 / JCM 10044 / NBRC 100330 / Delta H) (Methanobacterium thermoautotrophicum).